Consider the following 288-residue polypeptide: Acetyl-coenzyme A carboxylase carboxyl transferase subunit beta (288 aa).

The CoA carboxyltransferase N-terminal domain maps to 34–288 (LFAKCPACKH…HLVAFHGGGQ (255 aa)). 4 residues coordinate Zn(2+): cysteine 38, cysteine 41, cysteine 56, and cysteine 59. The C4-type zinc-finger motif lies at 38-59 (CPACKHMIYKKDLGLAKICPTC).

It belongs to the AccD/PCCB family. As to quaternary structure, acetyl-CoA carboxylase is a heterohexamer composed of biotin carboxyl carrier protein (AccB), biotin carboxylase (AccC) and two subunits each of ACCase subunit alpha (AccA) and ACCase subunit beta (AccD). The cofactor is Zn(2+).

The protein resides in the cytoplasm. It catalyses the reaction N(6)-carboxybiotinyl-L-lysyl-[protein] + acetyl-CoA = N(6)-biotinyl-L-lysyl-[protein] + malonyl-CoA. It participates in lipid metabolism; malonyl-CoA biosynthesis; malonyl-CoA from acetyl-CoA: step 1/1. Functionally, component of the acetyl coenzyme A carboxylase (ACC) complex. Biotin carboxylase (BC) catalyzes the carboxylation of biotin on its carrier protein (BCCP) and then the CO(2) group is transferred by the transcarboxylase to acetyl-CoA to form malonyl-CoA. This Streptococcus pyogenes serotype M4 (strain MGAS10750) protein is Acetyl-coenzyme A carboxylase carboxyl transferase subunit beta.